The following is a 177-amino-acid chain: Large ribosomal subunit protein uL6 (177 aa).

It belongs to the universal ribosomal protein uL6 family. Part of the 50S ribosomal subunit.

This protein binds to the 23S rRNA, and is important in its secondary structure. It is located near the subunit interface in the base of the L7/L12 stalk, and near the tRNA binding site of the peptidyltransferase center. This is Large ribosomal subunit protein uL6 from Citrobacter koseri (strain ATCC BAA-895 / CDC 4225-83 / SGSC4696).